A 184-amino-acid polypeptide reads, in one-letter code: LPS-assembly lipoprotein LptE (184 aa).

The first 19 residues, 1-19, serve as a signal peptide directing secretion; sequence MRHRLFTLVLGLAVLITAG. Cys-20 carries the N-palmitoyl cysteine lipid modification. Cys-20 carries S-diacylglycerol cysteine lipidation.

Belongs to the LptE lipoprotein family. As to quaternary structure, component of the lipopolysaccharide transport and assembly complex. Interacts with LptD.

It localises to the cell outer membrane. Its function is as follows. Together with LptD, is involved in the assembly of lipopolysaccharide (LPS) at the surface of the outer membrane. Required for the proper assembly of LptD. Binds LPS and may serve as the LPS recognition site at the outer membrane. This chain is LPS-assembly lipoprotein LptE, found in Pectobacterium atrosepticum (strain SCRI 1043 / ATCC BAA-672) (Erwinia carotovora subsp. atroseptica).